A 268-amino-acid polypeptide reads, in one-letter code: Undecaprenyl-diphosphatase (268 aa).

Transmembrane regions (helical) follow at residues 9 to 29 (VILG…TGHL), 47 to 67 (FDVL…FAKL), 83 to 103 (FIIG…AAGS), 107 to 127 (LFLF…AVLL), 144 to 164 (FPVL…IPGV), 184 to 204 (AAEF…VYDL), 218 to 238 (IVAV…KTFL), and 246 to 266 (FQLF…ALAM).

This sequence belongs to the UppP family.

It localises to the cell inner membrane. It carries out the reaction di-trans,octa-cis-undecaprenyl diphosphate + H2O = di-trans,octa-cis-undecaprenyl phosphate + phosphate + H(+). Functionally, catalyzes the dephosphorylation of undecaprenyl diphosphate (UPP). Confers resistance to bacitracin. This chain is Undecaprenyl-diphosphatase, found in Rhodopseudomonas palustris (strain HaA2).